The sequence spans 519 residues: Glutamate--cysteine ligase (519 aa).

This sequence belongs to the glutamate--cysteine ligase type 1 family. Type 1 subfamily.

It catalyses the reaction L-cysteine + L-glutamate + ATP = gamma-L-glutamyl-L-cysteine + ADP + phosphate + H(+). Its pathway is sulfur metabolism; glutathione biosynthesis; glutathione from L-cysteine and L-glutamate: step 1/2. This chain is Glutamate--cysteine ligase, found in Yersinia pseudotuberculosis serotype I (strain IP32953).